Here is a 315-residue protein sequence, read N- to C-terminus: Neuroguidin (315 aa).

At Ala-2 the chain carries N-acetylalanine. The stretch at 7–41 forms a coiled coil; that stretch reads LESDVSSSITLLKNLQEQVMAVTAQIQALTTKVRA. Residues 41–174 form a necessary for interaction with EIF4E region; the sequence is AGTYSTEKGL…KGSAKKYVPP (134 aa). Phosphoserine occurs at positions 121, 142, and 143. A disordered region spans residues 123-190; the sequence is SENDPLRFKP…YDETEAEREQ (68 aa). Residues 144–155 show a composition bias toward acidic residues; that stretch reads EDEEESEAEEGQ. Positions 180–190 are enriched in basic and acidic residues; sequence HYDETEAEREQ. Residues 181–203 adopt a coiled-coil conformation; that stretch reads YDETEAEREQKRLEKAKRRALSS. Phosphoserine occurs at positions 204 and 214. Basic and acidic residues-rich tracts occupy residues 212-225 and 232-241; these read QYSDAPEEIRDARH and SQEDQHRVNY. Disordered stretches follow at residues 212–243 and 284–315; these read QYSDAPEEIRDARHPHVTRQSQEDQHRVNYEE and GTAHLDEDQNPVKKRKKLPKKGRKKKGFRRRW. Over residues 295-315 the composition is skewed to basic residues; sequence VKKRKKLPKKGRKKKGFRRRW.

The protein belongs to the SAS10 family. Interacts with CPEB1 and EIF4E. Expressed in testis, ovary, spleen, kidney, hippocampus and cerebellum (at protein level). Expressed in testis, ovary, spleen, kidney, brain.

It is found in the nucleus. The protein localises to the nucleolus. It localises to the chromosome. Its subcellular location is the centromere. The protein resides in the cytoplasm. It is found in the cell projection. The protein localises to the axon. It localises to the dendrite. Its subcellular location is the filopodium. Part of the small subunit (SSU) processome, first precursor of the small eukaryotic ribosomal subunit. During the assembly of the SSU processome in the nucleolus, many ribosome biogenesis factors, an RNA chaperone and ribosomal proteins associate with the nascent pre-rRNA and work in concert to generate RNA folding, modifications, rearrangements and cleavage as well as targeted degradation of pre-ribosomal RNA by the RNA exosome. Its dissociation from the complex determines the transition from state pre-A1 to state pre-A1*. Inhibits mRNA translation in a cytoplasmic polyadenylation element (CPE)-dependent manner. This Mus musculus (Mouse) protein is Neuroguidin (Ngdn).